Here is a 414-residue protein sequence, read N- to C-terminus: Serine hydroxymethyltransferase (414 aa).

(6S)-5,6,7,8-tetrahydrofolate contacts are provided by residues Leu116 and 120–122 (GHL). Lys225 is modified (N6-(pyridoxal phosphate)lysine). Position 349–351 (349–351 (SPF)) interacts with (6S)-5,6,7,8-tetrahydrofolate.

Belongs to the SHMT family. As to quaternary structure, homodimer. Requires pyridoxal 5'-phosphate as cofactor.

The protein localises to the cytoplasm. It carries out the reaction (6R)-5,10-methylene-5,6,7,8-tetrahydrofolate + glycine + H2O = (6S)-5,6,7,8-tetrahydrofolate + L-serine. It functions in the pathway one-carbon metabolism; tetrahydrofolate interconversion. It participates in amino-acid biosynthesis; glycine biosynthesis; glycine from L-serine: step 1/1. In terms of biological role, catalyzes the reversible interconversion of serine and glycine with tetrahydrofolate (THF) serving as the one-carbon carrier. This reaction serves as the major source of one-carbon groups required for the biosynthesis of purines, thymidylate, methionine, and other important biomolecules. Also exhibits THF-independent aldolase activity toward beta-hydroxyamino acids, producing glycine and aldehydes, via a retro-aldol mechanism. The chain is Serine hydroxymethyltransferase from Oenococcus oeni (strain ATCC BAA-331 / PSU-1).